The primary structure comprises 302 residues: S-adenosylmethionine sensor upstream of mTORC1 (302 aa).

3 residues coordinate S-adenosyl-L-homocysteine: R73, G132, and D150. S-adenosyl-L-methionine is bound by residues R73, G132, D150, L151, D162, F163, and S196. 3 residues coordinate S-adenosyl-L-homocysteine: D162, F163, and S196.

This sequence belongs to the BMT2/SAMTOR family.

S-adenosyl-L-methionine-binding protein. It is unclear whether this protein acts as a sensor of S-adenosyl-L-methionine to signal methionine sufficiency to mTORC1. Probably acts as a S-adenosyl-L-methionine-dependent methyltransferase. This chain is S-adenosylmethionine sensor upstream of mTORC1, found in Drosophila melanogaster (Fruit fly).